The sequence spans 76 residues: Acyl carrier protein (76 aa).

Residues 1–74 (MFDKLKEIIA…DVVEYITEHT (74 aa)) enclose the Carrier domain. The residue at position 34 (S34) is an O-(pantetheine 4'-phosphoryl)serine.

This sequence belongs to the acyl carrier protein (ACP) family. Post-translationally, 4'-phosphopantetheine is transferred from CoA to a specific serine of apo-ACP by AcpS. This modification is essential for activity because fatty acids are bound in thioester linkage to the sulfhydryl of the prosthetic group.

Its subcellular location is the cytoplasm. It functions in the pathway lipid metabolism; fatty acid biosynthesis. Its function is as follows. Carrier of the growing fatty acid chain in fatty acid biosynthesis. The protein is Acyl carrier protein of Clostridium perfringens (strain ATCC 13124 / DSM 756 / JCM 1290 / NCIMB 6125 / NCTC 8237 / Type A).